A 121-amino-acid chain; its full sequence is Small ribosomal subunit protein uS13 (121 aa).

The interval 91–121 is disordered; sequence HRRGLPVRGQKTKNNARTRKGPVKTVANKKK.

The protein belongs to the universal ribosomal protein uS13 family. As to quaternary structure, part of the 30S ribosomal subunit. Forms a loose heterodimer with protein S19. Forms two bridges to the 50S subunit in the 70S ribosome.

Its function is as follows. Located at the top of the head of the 30S subunit, it contacts several helices of the 16S rRNA. In the 70S ribosome it contacts the 23S rRNA (bridge B1a) and protein L5 of the 50S subunit (bridge B1b), connecting the 2 subunits; these bridges are implicated in subunit movement. Contacts the tRNAs in the A and P-sites. This chain is Small ribosomal subunit protein uS13, found in Staphylococcus saprophyticus subsp. saprophyticus (strain ATCC 15305 / DSM 20229 / NCIMB 8711 / NCTC 7292 / S-41).